A 405-amino-acid chain; its full sequence is Indoleamine 2,3-dioxygenase acdA (405 aa).

His312 contacts heme.

It belongs to the indoleamine 2,3-dioxygenase family. Heme serves as cofactor.

The enzyme catalyses L-tryptophan + O2 = N-formyl-L-kynurenine. It participates in secondary metabolite biosynthesis. Its function is as follows. Indoleamine 2,3-dioxygenase; part of the gene cluster that mediates the biosynthesis of aspcandine, a pyrrolobenzazepine alkaloid. Initially, the indoleamine 2,3-dioxygenase acdA accepts L-tryptophan and performs the oxidative opening of the indole ring to yield N'-formyl-L-kynurenine, which undergoes the spontaneous deformylation reaction to provide L-kynurenine. The kynurenine 3-monooxygenase acdD then hydroxylates L-kynurenine to afford 3-hydroxy-L-kynurenine. 3-hydroxy-L-kynurenine is activated by the A domain of the NRPS-PKS acdB and subsequently loaded onto the enzyme. The KS domain conducts the decarboxylative condensation of the 3-hydroxy-L-kynurenyl and malonyl moieties, and subsequent nucleophilic attacks by the two amino groups would occur nonenzymatically at two distinct positions, achieving the chain release and the construction of the tricyclic system. Finally, a dehydration reaction completes the biosynthesis to yield aspcandine. This chain is Indoleamine 2,3-dioxygenase acdA, found in Aspergillus candidus.